We begin with the raw amino-acid sequence, 194 residues long: Large ribosomal subunit protein eL15 (194 aa).

The tract at residues 164 to 194 (SAGKKGRGLRNKGKGAEKIRPSIRANEGKGK) is disordered. Residues 167 to 176 (KKGRGLRNKG) show a composition bias toward basic residues. Residues 177–194 (KGAEKIRPSIRANEGKGK) are compositionally biased toward basic and acidic residues.

It belongs to the eukaryotic ribosomal protein eL15 family.

This is Large ribosomal subunit protein eL15 (rpl15e) from Pyrococcus abyssi (strain GE5 / Orsay).